The chain runs to 361 residues: Phospho-N-acetylmuramoyl-pentapeptide-transferase (361 aa).

Helical transmembrane passes span Ile27 to Trp47, Gly70 to Trp90, Ser97 to Tyr117, Tyr134 to Leu154, Thr167 to Ser187, Gly199 to Ser219, Thr236 to Tyr256, Val263 to Val283, Leu288 to Val308, and Lys338 to Leu358.

Belongs to the glycosyltransferase 4 family. MraY subfamily. It depends on Mg(2+) as a cofactor.

The protein resides in the cell inner membrane. The catalysed reaction is UDP-N-acetyl-alpha-D-muramoyl-L-alanyl-gamma-D-glutamyl-meso-2,6-diaminopimeloyl-D-alanyl-D-alanine + di-trans,octa-cis-undecaprenyl phosphate = di-trans,octa-cis-undecaprenyl diphospho-N-acetyl-alpha-D-muramoyl-L-alanyl-D-glutamyl-meso-2,6-diaminopimeloyl-D-alanyl-D-alanine + UMP. It functions in the pathway cell wall biogenesis; peptidoglycan biosynthesis. Catalyzes the initial step of the lipid cycle reactions in the biosynthesis of the cell wall peptidoglycan: transfers peptidoglycan precursor phospho-MurNAc-pentapeptide from UDP-MurNAc-pentapeptide onto the lipid carrier undecaprenyl phosphate, yielding undecaprenyl-pyrophosphoryl-MurNAc-pentapeptide, known as lipid I. This is Phospho-N-acetylmuramoyl-pentapeptide-transferase from Legionella pneumophila (strain Paris).